The following is a 377-amino-acid chain: Queuine tRNA-ribosyltransferase (377 aa).

Asp89 (proton acceptor) is an active-site residue. Substrate is bound by residues 89-93 (DSGGF), Asp143, Gln187, and Gly214. The segment at 245-251 (GVGKPED) is RNA binding. The active-site Nucleophile is Asp264. The tract at residues 269-273 (TRNAR) is RNA binding; important for wobble base 34 recognition. Zn(2+) is bound by residues Cys302, Cys304, Cys307, and His333.

The protein belongs to the queuine tRNA-ribosyltransferase family. As to quaternary structure, homodimer. Within each dimer, one monomer is responsible for RNA recognition and catalysis, while the other monomer binds to the replacement base PreQ1. Zn(2+) serves as cofactor.

It carries out the reaction 7-aminomethyl-7-carbaguanine + guanosine(34) in tRNA = 7-aminomethyl-7-carbaguanosine(34) in tRNA + guanine. It participates in tRNA modification; tRNA-queuosine biosynthesis. Functionally, catalyzes the base-exchange of a guanine (G) residue with the queuine precursor 7-aminomethyl-7-deazaguanine (PreQ1) at position 34 (anticodon wobble position) in tRNAs with GU(N) anticodons (tRNA-Asp, -Asn, -His and -Tyr). Catalysis occurs through a double-displacement mechanism. The nucleophile active site attacks the C1' of nucleotide 34 to detach the guanine base from the RNA, forming a covalent enzyme-RNA intermediate. The proton acceptor active site deprotonates the incoming PreQ1, allowing a nucleophilic attack on the C1' of the ribose to form the product. After dissociation, two additional enzymatic reactions on the tRNA convert PreQ1 to queuine (Q), resulting in the hypermodified nucleoside queuosine (7-(((4,5-cis-dihydroxy-2-cyclopenten-1-yl)amino)methyl)-7-deazaguanosine). This Shewanella piezotolerans (strain WP3 / JCM 13877) protein is Queuine tRNA-ribosyltransferase.